Reading from the N-terminus, the 671-residue chain is Copper amine oxidase 1 (671 aa).

The tract at residues 3–106 (PHPLAILSEE…QHRVVGKEHH (104 aa)) is N2. The N3 stretch occupies residues 107–211 (ASLTLSEFDT…DRPATGGKGE (105 aa)). 319–330 (AFDFGDGGGGNM) serves as a coordination point for substrate. Catalysis depends on aspartate 321, which acts as the Proton acceptor. An intrachain disulfide couples cysteine 340 to cysteine 366. Substrate is bound at residue 402–407 (LANYEY). The Schiff-base intermediate with substrate; via topaquinone role is filled by tyrosine 405. 2',4',5'-topaquinone is present on tyrosine 405. The Cu cation site is built by histidine 455 and histidine 457. Aspartate 464 is a Mn(2+) binding site. The N-linked (GlcNAc...) asparagine glycan is linked to asparagine 471. Aspartate 606 lines the Mn(2+) pocket. Histidine 617 provides a ligand contact to Cu cation.

The protein belongs to the copper/topaquinone oxidase family. Homodimer. Requires Cu cation as cofactor. The cofactor is Zn(2+). L-topaquinone is required as a cofactor. It depends on Mn(2+) as a cofactor. Post-translationally, topaquinone (TPQ) is generated by copper-dependent autoxidation of a specific tyrosyl residue.

It carries out the reaction histamine + O2 + H2O = imidazole-4-acetaldehyde + H2O2 + NH4(+). This is Copper amine oxidase 1 (AO-I) from Aspergillus niger.